We begin with the raw amino-acid sequence, 528 residues long: Bifunctional purine biosynthesis protein PurH (528 aa).

The MGS-like domain maps to 1–146; the sequence is MAPTALLSVS…KNHDHVAVLT (146 aa).

The protein belongs to the PurH family.

It catalyses the reaction (6R)-10-formyltetrahydrofolate + 5-amino-1-(5-phospho-beta-D-ribosyl)imidazole-4-carboxamide = 5-formamido-1-(5-phospho-D-ribosyl)imidazole-4-carboxamide + (6S)-5,6,7,8-tetrahydrofolate. The enzyme catalyses IMP + H2O = 5-formamido-1-(5-phospho-D-ribosyl)imidazole-4-carboxamide. It functions in the pathway purine metabolism; IMP biosynthesis via de novo pathway; 5-formamido-1-(5-phospho-D-ribosyl)imidazole-4-carboxamide from 5-amino-1-(5-phospho-D-ribosyl)imidazole-4-carboxamide (10-formyl THF route): step 1/1. Its pathway is purine metabolism; IMP biosynthesis via de novo pathway; IMP from 5-formamido-1-(5-phospho-D-ribosyl)imidazole-4-carboxamide: step 1/1. The polypeptide is Bifunctional purine biosynthesis protein PurH (Synechococcus sp. (strain WH7803)).